The following is a 185-amino-acid chain: MVKLGNNFAEKGTKQPLLEDGFDTIPLMTPLDVNQLQFPPPDKVVVKTKTEYEPDRKKGKARPPKIAEFTVSITEGVTERFKVSVLVLFALAFLTCVVFLVVYKVYKYDRACPDGFVLKNTQCIPEGLESYYTEQDSSAREKFYTVINHYNLAKQSITRSVSPWMSVLSEEKLSEQETEAAEKSA.

The Cytoplasmic segment spans residues 1–82 (MVKLGNNFAE…ITEGVTERFK (82 aa)). Residues 83 to 103 (VSVLVLFALAFLTCVVFLVVY) form a helical; Signal-anchor for type II membrane protein membrane-spanning segment. Residues 104 to 185 (KVYKYDRACP…QETEAAEKSA (82 aa)) lie on the Lumenal side of the membrane. The segment at 129 to 164 (ESYYTEQDSSAREKFYTVINHYNLAKQSITRSVSPW) is required for GRIP1 interaction.

It belongs to the NSG family. As to quaternary structure, forms a complex with GRIP1, GRIA2 and STX12; controls the intracellular fate of AMPAR and the endosomal sorting of the GRIA2 subunit toward recycling and membrane targeting. Interacts with GRIP1. Interacts with STX12. Interacts with APP; could regulate APP processing. Interacts with FAM171A1. In terms of tissue distribution, widely expressed in brain and spinal cord. Expressed in neurons during maturation and synapse formation.

The protein localises to the membrane. It localises to the golgi apparatus. It is found in the trans-Golgi network membrane. Its subcellular location is the endosome membrane. The protein resides in the cell projection. The protein localises to the dendrite. It localises to the early endosome membrane. It is found in the late endosome membrane. Its subcellular location is the lysosome lumen. The protein resides in the recycling endosome membrane. The protein localises to the cytoplasmic vesicle membrane. It localises to the golgi stack membrane. It is found in the endosome. Its subcellular location is the multivesicular body membrane. The protein resides in the endoplasmic reticulum membrane. In terms of biological role, plays a role in the recycling mechanism in neurons of multiple receptors, including AMPAR, APP and L1CAM and acts at the level of early endosomes to promote sorting of receptors toward a recycling pathway. Regulates sorting and recycling of GRIA2 through interaction with GRIP1 and then contributes to the regulation of synaptic transmission and plasticity by affecting the recycling and targeting of AMPA receptors to the synapse. Is required for faithful sorting of L1CAM to axons by facilitating trafficking from somatodendritic early endosome or the recycling endosome. In an other hand, induces apoptosis via the activation of CASP3 in response to DNA damage. The chain is Neuronal vesicle trafficking-associated protein 1 from Rattus norvegicus (Rat).